The following is a 366-amino-acid chain: Galactoside alpha-(1,2)-fucosyltransferase 1 (366 aa).

Residues 1-8 (MWPLSHRH) are Cytoplasmic-facing. The helical; Signal-anchor for type II membrane protein transmembrane segment at 9–25 (LCLAFLLVCVLSAISFF) threads the bilayer. The Lumenal segment spans residues 26–366 (LHIHQDSIRH…LSPLWTLAEP (341 aa)). N-linked (GlcNAc...) asparagine glycans are attached at residues asparagine 66, asparagine 302, and asparagine 328.

It belongs to the glycosyltransferase 11 family.

It localises to the golgi apparatus. The protein localises to the golgi stack membrane. The catalysed reaction is a beta-D-galactosyl-(1-&gt;4)-N-acetyl-beta-D-glucosaminyl derivative + GDP-beta-L-fucose = an alpha-L-Fuc-(1-&gt;2)-beta-D-Gal-(1-&gt;4)-beta-D-GlcNAc derivative + GDP + H(+). It catalyses the reaction a ganglioside GA1 + GDP-beta-L-fucose = a ganglioside Fuc-GA1 + GDP + H(+). The enzyme catalyses a beta-D-Gal-(1-&gt;3)-beta-D-GlcNAc-(1-&gt;3)-beta-D-Gal-(1-&gt;4)-beta-D-Glc-(1&lt;-&gt;1')-Cer(d18:1(4E)) + GDP-beta-L-fucose = alpha-L-fucosyl-(1-&gt;2)- beta-D-galactosyl-(1-&gt;3)-N-acetyl-beta-D-glucosaminyl-(1-&gt;3)-beta-D-galactosyl-(1-&gt;4)-beta-D-glucosyl-(1&lt;-&gt;1')-N-acylsphing-4-enine + GDP + H(+). It carries out the reaction a neolactoside nLc4Cer(d18:1(4E)) + GDP-beta-L-fucose = a neolactoside IV(2)-alpha-Fuc-nLc4Cer(d18:1(4E)) + GDP + H(+). The catalysed reaction is a ganglioside GM1 + GDP-beta-L-fucose = a ganglioside Fuc-GM1 + GDP + H(+). It catalyses the reaction beta-D-galactosyl-(1-&gt;3)-N-acetyl-D-galactosamine + GDP-beta-L-fucose = alpha-L-fucosyl-(1-&gt;2)-beta-D-galactosyl-(1-&gt;3)-N-acetyl-D-galactosamine + GDP + H(+). It participates in protein modification; protein glycosylation. Catalyzes the transfer of L-fucose, from a guanosine diphosphate-beta-L-fucose, to the terminal galactose residue of glycoconjugates through an alpha(1,2) linkage leading to H antigen synthesis that is an intermediate substrate in the synthesis of ABO blood group antigens. H antigen is essential for maturation of the glomerular layer of the main olfactory bulb, in cell migration and early cell-cell contacts during tumor associated angiogenesis. Preferentially fucosylates soluble lactose and to a lesser extent fucosylates glycolipids gangliosides GA1 and GM1a. The sequence is that of Galactoside alpha-(1,2)-fucosyltransferase 1 from Aotus nancymaae (Ma's night monkey).